A 352-amino-acid chain; its full sequence is 4-hydroxy-3-methylbut-2-enyl diphosphate reductase (352 aa).

A [4Fe-4S] cluster-binding site is contributed by C36. Residues H76 and H114 each contribute to the (2E)-4-hydroxy-3-methylbut-2-enyl diphosphate site. Dimethylallyl diphosphate contacts are provided by H76 and H114. Positions 76 and 114 each coordinate isopentenyl diphosphate. C136 serves as a coordination point for [4Fe-4S] cluster. Residue H164 participates in (2E)-4-hydroxy-3-methylbut-2-enyl diphosphate binding. H164 contributes to the dimethylallyl diphosphate binding site. H164 is a binding site for isopentenyl diphosphate. E166 acts as the Proton donor in catalysis. T204 contacts (2E)-4-hydroxy-3-methylbut-2-enyl diphosphate. C234 serves as a coordination point for [4Fe-4S] cluster. The (2E)-4-hydroxy-3-methylbut-2-enyl diphosphate site is built by S262, S263, N264, and S309. Dimethylallyl diphosphate-binding residues include S262, S263, N264, and S309. Isopentenyl diphosphate is bound by residues S262, S263, N264, and S309.

It belongs to the IspH family. [4Fe-4S] cluster serves as cofactor.

The enzyme catalyses isopentenyl diphosphate + 2 oxidized [2Fe-2S]-[ferredoxin] + H2O = (2E)-4-hydroxy-3-methylbut-2-enyl diphosphate + 2 reduced [2Fe-2S]-[ferredoxin] + 2 H(+). The catalysed reaction is dimethylallyl diphosphate + 2 oxidized [2Fe-2S]-[ferredoxin] + H2O = (2E)-4-hydroxy-3-methylbut-2-enyl diphosphate + 2 reduced [2Fe-2S]-[ferredoxin] + 2 H(+). It participates in isoprenoid biosynthesis; dimethylallyl diphosphate biosynthesis; dimethylallyl diphosphate from (2E)-4-hydroxy-3-methylbutenyl diphosphate: step 1/1. The protein operates within isoprenoid biosynthesis; isopentenyl diphosphate biosynthesis via DXP pathway; isopentenyl diphosphate from 1-deoxy-D-xylulose 5-phosphate: step 6/6. Functionally, catalyzes the conversion of 1-hydroxy-2-methyl-2-(E)-butenyl 4-diphosphate (HMBPP) into a mixture of isopentenyl diphosphate (IPP) and dimethylallyl diphosphate (DMAPP). Acts in the terminal step of the DOXP/MEP pathway for isoprenoid precursor biosynthesis. The chain is 4-hydroxy-3-methylbut-2-enyl diphosphate reductase from Bifidobacterium longum (strain NCC 2705).